A 575-amino-acid chain; its full sequence is Isocitrate dehydrogenase kinase/phosphatase (575 aa).

ATP-binding positions include 315 to 321 (APGVKGM) and Lys-336. Asp-371 is an active-site residue.

This sequence belongs to the AceK family.

Its subcellular location is the cytoplasm. It carries out the reaction L-seryl-[isocitrate dehydrogenase] + ATP = O-phospho-L-seryl-[isocitrate dehydrogenase] + ADP + H(+). Bifunctional enzyme which can phosphorylate or dephosphorylate isocitrate dehydrogenase (IDH) on a specific serine residue. This is a regulatory mechanism which enables bacteria to bypass the Krebs cycle via the glyoxylate shunt in response to the source of carbon. When bacteria are grown on glucose, IDH is fully active and unphosphorylated, but when grown on acetate or ethanol, the activity of IDH declines drastically concomitant with its phosphorylation. The sequence is that of Isocitrate dehydrogenase kinase/phosphatase from Yersinia enterocolitica serotype O:8 / biotype 1B (strain NCTC 13174 / 8081).